The primary structure comprises 574 residues: Arginine--tRNA ligase (574 aa).

The 'HIGH' region signature appears at 126–136 (PNIAKRMHVGH).

The protein belongs to the class-I aminoacyl-tRNA synthetase family. As to quaternary structure, monomer.

It is found in the cytoplasm. The enzyme catalyses tRNA(Arg) + L-arginine + ATP = L-arginyl-tRNA(Arg) + AMP + diphosphate. This chain is Arginine--tRNA ligase, found in Chloroflexus aurantiacus (strain ATCC 29366 / DSM 635 / J-10-fl).